A 129-amino-acid polypeptide reads, in one-letter code: uncharacterized protein (129 aa).

Residues 103–125 traverse the membrane as a helical segment; the sequence is AISSAFQYGLSTSNFFFIFLYIF.

The protein localises to the membrane. This is an uncharacterized protein from Acanthamoeba polyphaga (Amoeba).